The primary structure comprises 251 residues: Triosephosphate isomerase (251 aa).

9–11 (NWK) provides a ligand contact to substrate. H95 (electrophile) is an active-site residue. The active-site Proton acceptor is the E167. Substrate is bound by residues G173, S212, and 233–234 (GG).

It belongs to the triosephosphate isomerase family. As to quaternary structure, homodimer.

The protein localises to the cytoplasm. It carries out the reaction D-glyceraldehyde 3-phosphate = dihydroxyacetone phosphate. Its pathway is carbohydrate biosynthesis; gluconeogenesis. It functions in the pathway carbohydrate degradation; glycolysis; D-glyceraldehyde 3-phosphate from glycerone phosphate: step 1/1. Involved in the gluconeogenesis. Catalyzes stereospecifically the conversion of dihydroxyacetone phosphate (DHAP) to D-glyceraldehyde-3-phosphate (G3P). This Pseudomonas putida (strain ATCC 700007 / DSM 6899 / JCM 31910 / BCRC 17059 / LMG 24140 / F1) protein is Triosephosphate isomerase.